The primary structure comprises 1012 residues: Klotho (1012 aa).

Residues 1 to 33 (MPASAPPRRPRPPPPSLSLLLVLLGLGGRRLRA) form the signal peptide. Over 34 to 981 (EPGDGAQTWA…ECSFFHTRKS (948 aa)) the chain is Extracellular. 2 glycosyl hydrolase-1 regions span residues 57-506 (FQGT…KNGF) and 515-953 (LEGT…SNGF). N-linked (GlcNAc...) asparagine glycans are attached at residues N106, N159, N283, N344, N607, N612, and N694. The chain crosses the membrane as a helical span at residues 982-1002 (LLAFIAFLFFASIISLSLIFY). Residues 1003–1012 (YSKKGRRSYK) are Cytoplasmic-facing.

This sequence belongs to the glycosyl hydrolase 1 family. Klotho subfamily. Homodimer. Interacts with FGF23 and FGFR1. Post-translationally, N-glycosylated. In terms of tissue distribution, present in cortical renal tubules (at protein level). Soluble peptide is present in serum and cerebrospinal fluid. Expressed in kidney, placenta, small intestine and prostate. Down-regulated in renal cell carcinomas, hepatocellular carcinomas, and in chronic renal failure kidney.

The protein localises to the cell membrane. The protein resides in the apical cell membrane. It localises to the secreted. The enzyme catalyses a beta-D-glucuronoside + H2O = D-glucuronate + an alcohol. In terms of biological role, may have weak glycosidase activity towards glucuronylated steroids. However, it lacks essential active site Glu residues at positions 239 and 872, suggesting it may be inactive as a glycosidase in vivo. May be involved in the regulation of calcium and phosphorus homeostasis by inhibiting the synthesis of active vitamin D. Essential factor for the specific interaction between FGF23 and FGFR1. Its function is as follows. The Klotho peptide generated by cleavage of the membrane-bound isoform may be an anti-aging circulating hormone which would extend life span by inhibiting insulin/IGF1 signaling. This is Klotho (KL) from Homo sapiens (Human).